The sequence spans 408 residues: Succinylornithine transaminase (408 aa).

Residue Lys-252 is modified to N6-(pyridoxal phosphate)lysine.

It belongs to the class-III pyridoxal-phosphate-dependent aminotransferase family. AstC subfamily. Requires pyridoxal 5'-phosphate as cofactor.

It carries out the reaction N(2)-succinyl-L-ornithine + 2-oxoglutarate = N-succinyl-L-glutamate 5-semialdehyde + L-glutamate. It participates in amino-acid degradation; L-arginine degradation via AST pathway; L-glutamate and succinate from L-arginine: step 3/5. In terms of biological role, catalyzes the transamination of N(2)-succinylornithine and alpha-ketoglutarate into N(2)-succinylglutamate semialdehyde and glutamate. Can also act as an acetylornithine aminotransferase. The protein is Succinylornithine transaminase of Salmonella typhi.